The following is a 270-amino-acid chain: Orotidine 5'-phosphate decarboxylase (270 aa).

K89 functions as the Proton donor in the catalytic mechanism.

Belongs to the OMP decarboxylase family. Type 2 subfamily.

The catalysed reaction is orotidine 5'-phosphate + H(+) = UMP + CO2. It functions in the pathway pyrimidine metabolism; UMP biosynthesis via de novo pathway; UMP from orotate: step 2/2. This chain is Orotidine 5'-phosphate decarboxylase, found in Dehalococcoides mccartyi (strain CBDB1).